The sequence spans 238 residues: 2-C-methyl-D-erythritol 4-phosphate cytidylyltransferase (238 aa).

This sequence belongs to the IspD/TarI cytidylyltransferase family. IspD subfamily.

It catalyses the reaction 2-C-methyl-D-erythritol 4-phosphate + CTP + H(+) = 4-CDP-2-C-methyl-D-erythritol + diphosphate. It functions in the pathway isoprenoid biosynthesis; isopentenyl diphosphate biosynthesis via DXP pathway; isopentenyl diphosphate from 1-deoxy-D-xylulose 5-phosphate: step 2/6. Its function is as follows. Catalyzes the formation of 4-diphosphocytidyl-2-C-methyl-D-erythritol from CTP and 2-C-methyl-D-erythritol 4-phosphate (MEP). The chain is 2-C-methyl-D-erythritol 4-phosphate cytidylyltransferase from Paraburkholderia phytofirmans (strain DSM 17436 / LMG 22146 / PsJN) (Burkholderia phytofirmans).